Reading from the N-terminus, the 535-residue chain is EH domain-containing protein 3 (535 aa).

Met1 carries the post-translational modification N-acetylmethionine. Residues 55-286 (FDNKPMVLLV…DLFRDIQSLP (232 aa)) enclose the Dynamin-type G domain. The G1 motif stretch occupies residues 65-72 (GQYSTGKT). 65–72 (GQYSTGKT) contacts ATP. The interval 91–92 (EP) is G2 motif. The interval 153–156 (DTPG) is G3 motif. Residues 198 to 227 (DEFSEVIKALKNHEDKMRVVLNKADQIETQ) adopt a coiled-coil conformation. The segment at 219-222 (NKAD) is G4 motif. Lys220 provides a ligand contact to ATP. Position 243 (Ile243) is a region of interest, G5 motif. Trp258 is an ATP binding site. A Glycyl lysine isopeptide (Lys-Gly) (interchain with G-Cter in SUMO) cross-link involves residue Lys315. Phosphoserine occurs at positions 349 and 456. The EH domain occupies 444-532 (DKPMYDEIFY…AHLLPPSKRK (89 aa)). Positions 476 to 511 (LPNSVLGKIWKLADIDKDGMLDDDEFALANHLIKVK) constitute an EF-hand domain. Ca(2+)-binding residues include Asp489, Asp491, Asp493, Met495, and Glu500. Residue Lys511 forms a Glycyl lysine isopeptide (Lys-Gly) (interchain with G-Cter in SUMO) linkage.

It belongs to the TRAFAC class dynamin-like GTPase superfamily. Dynamin/Fzo/YdjA family. EHD subfamily. As to quaternary structure, homooligomer, and heterooligomer with EHD1, EHD2 and EHD4, ATP-binding is required for heterooligomerization. Interacts with PACSIN1. Interacts with PACSIN2. Interacts (via EH domain) with MICALL1. Interacts (via EH domain) with RAB11FIP2. Interacts with ANK2. Highly expressed in heart and brain and moderately expressed in kidney, liver, and placenta.

It is found in the recycling endosome membrane. It localises to the cell membrane. Its subcellular location is the cell projection. The protein resides in the cilium membrane. Functionally, ATP- and membrane-binding protein that controls membrane reorganization/tubulation upon ATP hydrolysis. In vitro causes tubulation of endocytic membranes. Binding to phosphatidic acid induces its membrane tubulation activity. Plays a role in endocytic transport. Involved in early endosome to recycling endosome compartment (ERC), retrograde early endosome to Golgi, and endosome to plasma membrane (rapid recycling) protein transport. Involved in the regulation of Golgi maintenance and morphology. Involved in the recycling of internalized D1 dopamine receptor. Plays a role in cardiac protein trafficking probably implicating ANK2. Involved in the ventricular membrane targeting of SLC8A1 and CACNA1C and probably the atrial membrane localization of CACNA1GG and CACNA1H implicated in the regulation of atrial myocyte excitability and cardiac conduction. In conjunction with EHD4 may be involved in endocytic trafficking of KDR/VEGFR2 implicated in control of glomerular function. Involved in the rapid recycling of integrin beta-3 implicated in cell adhesion maintenance. Involved in the unidirectional retrograde dendritic transport of endocytosed BACE1 and in efficient sorting of BACE1 to axons implicating a function in neuronal APP processing. Plays a role in the formation of the ciliary vesicle, an early step in cilium biogenesis; possibly sharing redundant functions with EHD1. This Homo sapiens (Human) protein is EH domain-containing protein 3.